The primary structure comprises 189 residues: MIKAIIGLGNPGEKYKNTRHNVGFMVADLVAKSLNCDRKYREKAFSHIFECPDYDVIIAKPQTYMNLSGNAVLNILKDYKIKPSEILVVYDDLDLPLGAVRLRLKGSSGGHNGIKSIINTIKTEEFPRLKIGIGRPEKKEEVSDYVLSPFTKEEKFLLDKVLAHANECILNVLKYGIEKSMNMCNKNLV.

Tyr15 serves as a coordination point for tRNA. His20 acts as the Proton acceptor in catalysis. TRNA-binding residues include Tyr64, Asn66, and Asn112.

Belongs to the PTH family. Monomer.

It localises to the cytoplasm. It carries out the reaction an N-acyl-L-alpha-aminoacyl-tRNA + H2O = an N-acyl-L-amino acid + a tRNA + H(+). Hydrolyzes ribosome-free peptidyl-tRNAs (with 1 or more amino acids incorporated), which drop off the ribosome during protein synthesis, or as a result of ribosome stalling. Its function is as follows. Catalyzes the release of premature peptidyl moieties from peptidyl-tRNA molecules trapped in stalled 50S ribosomal subunits, and thus maintains levels of free tRNAs and 50S ribosomes. The polypeptide is Peptidyl-tRNA hydrolase (Sulfurihydrogenibium sp. (strain YO3AOP1)).